The primary structure comprises 366 residues: MASMAAVLTWALALLSAFSATQARKGFWDYFSQTSGDKGRVEQIHQQKMAREPATLKDSLEQDLNNMNKFLEKLRPLSGSEAPRLPQDPVGMRRQLQEELEEVKARLQPYMAEAHELVGWNLEGLRQQLKPYTMDLMEQVALRVQELQEQLRVVGEDTKAQLLGGVDEAWALLQGLQSRVVHHTGRFKELFHPYAESLVSGIGRHVQELHRSVAPHAPASPARLSRCVQVLSRKLTLKAKALHARIQQNLDQLREELSRAFAGTGTEEGAGPDPQMLSEEVRQRLQAFRQDTYLQIAAFTRAIDQETEEVQQQLAPPPPGHSAFAPEFQQTDSGKVLSKLQARLDDLWEDITHSLHDQGHSHLGDP.

Positions Met1–Ala23 are cleaved as a signal peptide. 2 coiled-coil regions span residues Ala54–Asp157 and Thr236–Ala262. Thr55 carries the phosphothreonine; by FAM20C modification. Ser59 carries the phosphoserine modification.

The protein belongs to the apolipoprotein A1/A4/E family. In terms of assembly, interacts with GPIHBP1. Interacts with SORL1; this interaction leads to APOA5 internalization and sorting either to lysosomes and degradation, or to the trans-Golgi network. In terms of processing, phosphorylated by FAM20C in the extracellular medium. In terms of tissue distribution, liver and plasma.

The protein localises to the secreted. It is found in the early endosome. Its subcellular location is the late endosome. The protein resides in the golgi apparatus. It localises to the trans-Golgi network. Functionally, minor apolipoprotein mainly associated with HDL and to a lesser extent with VLDL. May also be associated with chylomicrons. Important determinant of plasma triglyceride (TG) levels by both being a potent stimulator of apo-CII lipoprotein lipase (LPL) TG hydrolysis and an inhibitor of the hepatic VLDL-TG production rate (without affecting the VLDL-apoB production rate). Activates poorly lecithin:cholesterol acyltransferase (LCAT) and does not enhance efflux of cholesterol from macrophages. Binds heparin. The protein is Apolipoprotein A-V (APOA5) of Homo sapiens (Human).